The following is a 106-amino-acid chain: A-type ATP synthase subunit F (106 aa).

This sequence belongs to the V-ATPase F subunit family. Has multiple subunits with at least A(3), B(3), C, D, E, F, H, I and proteolipid K(x).

It localises to the cell membrane. Component of the A-type ATP synthase that produces ATP from ADP in the presence of a proton gradient across the membrane. This is A-type ATP synthase subunit F from Methanothermobacter thermautotrophicus (strain ATCC 29096 / DSM 1053 / JCM 10044 / NBRC 100330 / Delta H) (Methanobacterium thermoautotrophicum).